Here is a 311-residue protein sequence, read N- to C-terminus: Methionyl-tRNA formyltransferase (311 aa).

110–113 (SLLP) is a binding site for (6S)-5,6,7,8-tetrahydrofolate.

It belongs to the Fmt family.

It carries out the reaction L-methionyl-tRNA(fMet) + (6R)-10-formyltetrahydrofolate = N-formyl-L-methionyl-tRNA(fMet) + (6S)-5,6,7,8-tetrahydrofolate + H(+). Functionally, attaches a formyl group to the free amino group of methionyl-tRNA(fMet). The formyl group appears to play a dual role in the initiator identity of N-formylmethionyl-tRNA by promoting its recognition by IF2 and preventing the misappropriation of this tRNA by the elongation apparatus. This is Methionyl-tRNA formyltransferase from Streptococcus uberis (strain ATCC BAA-854 / 0140J).